Here is a 636-residue protein sequence, read N- to C-terminus: LEAF RUST 10 DISEASE-RESISTANCE LOCUS RECEPTOR-LIKE PROTEIN KINASE-like 1.5 (636 aa).

The first 26 residues, 1–26 (MSQPPWRCFSLLIFVLTIFSTKPSSA), serve as a signal peptide directing secretion. Over 27 to 257 (STSCSSSFHC…NNKRVNHIAV (231 aa)) the chain is Extracellular. N-linked (GlcNAc...) asparagine glycans are attached at residues Asn-73, Asn-102, Asn-146, and Asn-224. The helical transmembrane segment at 258-278 (LSLIFALTCLLLVFSVAVAIF) threads the bilayer. Over 279–636 (RSRRASFLSS…RVADDDVAKN (358 aa)) the chain is Cytoplasmic. Positions 324–628 (FDPKRKIGDG…LRRIRSHTRV (305 aa)) constitute a Protein kinase domain. ATP contacts are provided by residues 330–338 (IGDGGFGSV) and Lys-352. The active-site Proton acceptor is the Asp-458.

The protein belongs to the protein kinase superfamily. Ser/Thr protein kinase family.

Its subcellular location is the cell membrane. The catalysed reaction is L-seryl-[protein] + ATP = O-phospho-L-seryl-[protein] + ADP + H(+). It catalyses the reaction L-threonyl-[protein] + ATP = O-phospho-L-threonyl-[protein] + ADP + H(+). The sequence is that of LEAF RUST 10 DISEASE-RESISTANCE LOCUS RECEPTOR-LIKE PROTEIN KINASE-like 1.5 from Arabidopsis thaliana (Mouse-ear cress).